The primary structure comprises 179 residues: Outer-membrane lipoprotein carrier protein (179 aa).

The first 22 residues, 1-22 (MEVLRRYVLVFTSLCMTLFAWG), serve as a signal peptide directing secretion.

It belongs to the LolA family. Monomer.

It is found in the periplasm. Functionally, participates in the translocation of lipoproteins from the inner membrane to the outer membrane. Only forms a complex with a lipoprotein if the residue after the N-terminal Cys is not an aspartate (The Asp acts as a targeting signal to indicate that the lipoprotein should stay in the inner membrane). The sequence is that of Outer-membrane lipoprotein carrier protein from Helicobacter hepaticus (strain ATCC 51449 / 3B1).